Consider the following 116-residue polypeptide: SGSCSLKTCWLQLADFRKVGDHLKEKYDSAAAMRINRKGKLELVNSRFNTPTVEDLVYTDQSPDYCLRNESTGSMGTLGRLCNKTSEGMDGCELMCCGRGYDQFKTVQVERCHCKF.

Ser1 carries the O-palmitoleoyl serine; by PORCN lipid modification. N-linked (GlcNAc...) asparagine glycans are attached at residues Asn69 and Asn83. Cys82 and Cys97 are joined by a disulfide.

The protein belongs to the Wnt family. Palmitoleoylation is required for efficient binding to frizzled receptors. Depalmitoleoylation leads to Wnt signaling pathway inhibition.

The protein localises to the secreted. It localises to the extracellular space. The protein resides in the extracellular matrix. Ligand for members of the frizzled family of seven transmembrane receptors. Probable developmental protein. May be a signaling molecule which affects the development of discrete regions of tissues. Is likely to signal over only few cell diameters. This chain is Protein Wnt-5b (WNT-5B), found in Plethodon jordani (Red-cheeked salamander).